The sequence spans 556 residues: Glucomannan 4-beta-mannosyltransferase 7 (556 aa).

Residues 58–78 (VVVPVFKFLVLLCLVMSVMFF) form a helical membrane-spanning segment. Asp-158 is a catalytic residue. Substrate-binding residues include Asp-217 and Asp-219. Asp-311 is a catalytic residue. 4 helical membrane passes run 390–410 (IVAH…TVLF), 426–448 (LITL…WVLF), 502–522 (LLEL…IVYG), and 526–546 (LYVY…GFVG).

The protein belongs to the glycosyltransferase 2 family. Plant cellulose synthase-like A subfamily. In terms of tissue distribution, ubiquitous.

The protein localises to the golgi apparatus membrane. It carries out the reaction GDP-mannose + (glucomannan)n = GDP + (glucomannan)n+1.. Functionally, probable mannan synthase which consists of a 4-beta-mannosyltransferase activity on mannan using GDP-mannose. The beta-1,4-mannan product is the backbone for galactomannan synthesis by galactomannan galactosyltransferase. Galactomannan is a noncellulosic polysaccharides of plant cell wall. Required for synthesis of a cell wall polysaccharide essential for pollen tube growth, for cell wall structure, or for signaling during plant embryo development. The chain is Glucomannan 4-beta-mannosyltransferase 7 from Arabidopsis thaliana (Mouse-ear cress).